Consider the following 230-residue polypeptide: Cytochrome c oxidase subunit 2 (230 aa).

Residues 1-14 (MAYPLQLGFQDATS) are Mitochondrial intermembrane-facing. A helical transmembrane segment spans residues 15–45 (PIMEELLHFHDHTLMIVFLISSLVLYIISTM). Over 46-59 (LTTKLTHTNTMDAQ) the chain is Mitochondrial matrix. A helical transmembrane segment spans residues 60 to 87 (EVETIWTILPAIILILIALPSLRILYMM). The Mitochondrial intermembrane portion of the chain corresponds to 88–230 (DEINNPNLTI…NWTSSMMSTS (143 aa)). Cu cation is bound by residues histidine 161, cysteine 196, glutamate 198, cysteine 200, histidine 204, and methionine 207. Position 198 (glutamate 198) interacts with Mg(2+). Position 218 is a phosphotyrosine (tyrosine 218).

Belongs to the cytochrome c oxidase subunit 2 family. In terms of assembly, component of the cytochrome c oxidase (complex IV, CIV), a multisubunit enzyme composed of 14 subunits. The complex is composed of a catalytic core of 3 subunits MT-CO1, MT-CO2 and MT-CO3, encoded in the mitochondrial DNA, and 11 supernumerary subunits COX4I, COX5A, COX5B, COX6A, COX6B, COX6C, COX7A, COX7B, COX7C, COX8 and NDUFA4, which are encoded in the nuclear genome. The complex exists as a monomer or a dimer and forms supercomplexes (SCs) in the inner mitochondrial membrane with NADH-ubiquinone oxidoreductase (complex I, CI) and ubiquinol-cytochrome c oxidoreductase (cytochrome b-c1 complex, complex III, CIII), resulting in different assemblies (supercomplex SCI(1)III(2)IV(1) and megacomplex MCI(2)III(2)IV(2)). Found in a complex with TMEM177, COA6, COX18, COX20, SCO1 and SCO2. Interacts with TMEM177 in a COX20-dependent manner. Interacts with COX20. Interacts with COX16. Cu cation is required as a cofactor.

It localises to the mitochondrion inner membrane. The catalysed reaction is 4 Fe(II)-[cytochrome c] + O2 + 8 H(+)(in) = 4 Fe(III)-[cytochrome c] + 2 H2O + 4 H(+)(out). Component of the cytochrome c oxidase, the last enzyme in the mitochondrial electron transport chain which drives oxidative phosphorylation. The respiratory chain contains 3 multisubunit complexes succinate dehydrogenase (complex II, CII), ubiquinol-cytochrome c oxidoreductase (cytochrome b-c1 complex, complex III, CIII) and cytochrome c oxidase (complex IV, CIV), that cooperate to transfer electrons derived from NADH and succinate to molecular oxygen, creating an electrochemical gradient over the inner membrane that drives transmembrane transport and the ATP synthase. Cytochrome c oxidase is the component of the respiratory chain that catalyzes the reduction of oxygen to water. Electrons originating from reduced cytochrome c in the intermembrane space (IMS) are transferred via the dinuclear copper A center (CU(A)) of subunit 2 and heme A of subunit 1 to the active site in subunit 1, a binuclear center (BNC) formed by heme A3 and copper B (CU(B)). The BNC reduces molecular oxygen to 2 water molecules using 4 electrons from cytochrome c in the IMS and 4 protons from the mitochondrial matrix. The sequence is that of Cytochrome c oxidase subunit 2 (MT-CO2) from Ornithorhynchus anatinus (Duckbill platypus).